The sequence spans 368 residues: Phospho-N-acetylmuramoyl-pentapeptide-transferase (368 aa).

The next 9 membrane-spanning stretches (helical) occupy residues 2–22 (IALI…TPLL), 51–71 (TLGG…SALY), 80–100 (PSWS…LGFI), 117–137 (GGKF…ALLI), 167–187 (VAII…TNAV), 193–213 (LDGL…IIAF), 234–254 (PLDL…FLWY), 271–291 (LGGL…AVVL), and 340–360 (FWMI…GDWV).

This sequence belongs to the glycosyltransferase 4 family. MraY subfamily. Mg(2+) serves as cofactor.

The protein localises to the cell membrane. It carries out the reaction UDP-N-acetyl-alpha-D-muramoyl-L-alanyl-gamma-D-glutamyl-meso-2,6-diaminopimeloyl-D-alanyl-D-alanine + di-trans,octa-cis-undecaprenyl phosphate = di-trans,octa-cis-undecaprenyl diphospho-N-acetyl-alpha-D-muramoyl-L-alanyl-D-glutamyl-meso-2,6-diaminopimeloyl-D-alanyl-D-alanine + UMP. It functions in the pathway cell wall biogenesis; peptidoglycan biosynthesis. Its function is as follows. Catalyzes the initial step of the lipid cycle reactions in the biosynthesis of the cell wall peptidoglycan: transfers peptidoglycan precursor phospho-MurNAc-pentapeptide from UDP-MurNAc-pentapeptide onto the lipid carrier undecaprenyl phosphate, yielding undecaprenyl-pyrophosphoryl-MurNAc-pentapeptide, known as lipid I. This is Phospho-N-acetylmuramoyl-pentapeptide-transferase from Bifidobacterium longum (strain DJO10A).